A 364-amino-acid chain; its full sequence is Variable large protein 21 (364 aa).

Positions 1–26 (MRKRISAIINKLNISIMMMIVVLMIG) are cleaved as a signal peptide. Residue Cys27 is the site of N-palmitoyl cysteine attachment. Cys27 carries the S-diacylglycerol cysteine lipid modification.

Belongs to the variable large protein (Vlp) family. Alpha subfamily.

It localises to the cell outer membrane. The Vlp and Vsp proteins are antigenically distinct proteins, only one vlp or vsp gene is transcriptionally active at any one time. Switching between these genes is a mechanism of host immune response evasion. In Borrelia hermsii, this protein is Variable large protein 21.